Consider the following 676-residue polypeptide: MPDPSTYRPAPGSIPVEPGVYRFRDPHGRVIYVGKAKSLRSRLNSYFADLSGLAPRTRQMVMTAAKVEWTVVNTEVEALQLEYNWIKEFDPRFNIRYRDDKSYPVLAVTLNEEFPRLKVYRGPRKKGVRYFGPYSHAWAIRETVDLLTRVFPARTCSAGVFKRHNQIDRPCLLGYIDKCSAPCVGRVSAEQHRQIVLDFCDFLAGKTDRLVRDLERKMTAAAEDLDFERAARLRDDIGALRRALEKQTVVFGDGTDADVVAFADDDLEAAVQVFHVRGGRVRGQRGWIVEKSGEPGESGEGQLVEQFLTQFYGDQAELGSAGDNAGDSGQDEATNPVPRQVLVPCLPDNADELTEWLSQLRGSRVALRVPQRGDKKALFETVQRNAKEALAQHKLKRAGDFTARTAALQSIQDTLGLADAPLRIECIDISHVQGTDVVASLVVFEDGLPRKSDYRHYAIREAAGDGRSDDVASIAEVTRRRFYRHLHDTQHPTELSAEGKSRKFAYPPNLFVVDGGAPQVNAAQAVLDELGISDVAVIGLAKRLEEVWVPSGSDLGPEPIILPRNSEGLYLLQRVRDEAHRFAITYHRSKRSKRMTASALDSVRGLGEHRRKALVTHFGSVARLKEASVEEITAVPGIGVTTARAVLEALGVPQAAPADSGTAAAVIDDDQRRVTG.

Residues 16–95 (VEPGVYRFRD…IKEFDPRFNI (80 aa)) form the GIY-YIG domain. One can recognise a UVR domain in the interval 208-243 (DRLVRDLERKMTAAAEDLDFERAARLRDDIGALRRA).

This sequence belongs to the UvrC family. Interacts with UvrB in an incision complex.

It is found in the cytoplasm. In terms of biological role, the UvrABC repair system catalyzes the recognition and processing of DNA lesions. UvrC both incises the 5' and 3' sides of the lesion. The N-terminal half is responsible for the 3' incision and the C-terminal half is responsible for the 5' incision. The sequence is that of UvrABC system protein C from Mycobacterium sp. (strain JLS).